The following is a 487-amino-acid chain: UDP-N-acetylmuramate--L-alanine ligase (487 aa).

ATP is bound at residue 130 to 136; the sequence is GTHGKTT.

This sequence belongs to the MurCDEF family.

It localises to the cytoplasm. The enzyme catalyses UDP-N-acetyl-alpha-D-muramate + L-alanine + ATP = UDP-N-acetyl-alpha-D-muramoyl-L-alanine + ADP + phosphate + H(+). Its pathway is cell wall biogenesis; peptidoglycan biosynthesis. Cell wall formation. The sequence is that of UDP-N-acetylmuramate--L-alanine ligase from Photobacterium profundum (strain SS9).